We begin with the raw amino-acid sequence, 98 residues long: NADH-ubiquinone oxidoreductase chain 4L (98 aa).

3 consecutive transmembrane segments (helical) span residues 1–21 (MSMV…GLLI), 29–49 (SLLC…VTIL), and 61–81 (IILL…LVMV).

This sequence belongs to the complex I subunit 4L family. In terms of assembly, core subunit of respiratory chain NADH dehydrogenase (Complex I) which is composed of 45 different subunits.

The protein resides in the mitochondrion inner membrane. The catalysed reaction is a ubiquinone + NADH + 5 H(+)(in) = a ubiquinol + NAD(+) + 4 H(+)(out). Core subunit of the mitochondrial membrane respiratory chain NADH dehydrogenase (Complex I) which catalyzes electron transfer from NADH through the respiratory chain, using ubiquinone as an electron acceptor. Part of the enzyme membrane arm which is embedded in the lipid bilayer and involved in proton translocation. In Taxidea taxus (American badger), this protein is NADH-ubiquinone oxidoreductase chain 4L (MT-ND4L).